The sequence spans 318 residues: tRNA-cytidine(32) 2-sulfurtransferase (318 aa).

A PP-loop motif motif is present at residues 52–57; that stretch reads SGGKDS. [4Fe-4S] cluster contacts are provided by Cys-127, Cys-130, and Cys-218.

This sequence belongs to the TtcA family. In terms of assembly, homodimer. Mg(2+) is required as a cofactor. Requires [4Fe-4S] cluster as cofactor.

It is found in the cytoplasm. It carries out the reaction cytidine(32) in tRNA + S-sulfanyl-L-cysteinyl-[cysteine desulfurase] + AH2 + ATP = 2-thiocytidine(32) in tRNA + L-cysteinyl-[cysteine desulfurase] + A + AMP + diphosphate + H(+). It functions in the pathway tRNA modification. Its function is as follows. Catalyzes the ATP-dependent 2-thiolation of cytidine in position 32 of tRNA, to form 2-thiocytidine (s(2)C32). The sulfur atoms are provided by the cysteine/cysteine desulfurase (IscS) system. This Actinobacillus pleuropneumoniae serotype 7 (strain AP76) protein is tRNA-cytidine(32) 2-sulfurtransferase.